Reading from the N-terminus, the 164-residue chain is Urease subunit beta (164 aa).

Composition is skewed to polar residues over residues 1-10 and 20-30; these read MSTKTNSTKA and TNRGTKSSAGY. The segment at 1–30 is disordered; sequence MSTKTNSTKATSEKTDSLKTNRGTKSSAGY.

This sequence belongs to the urease beta subunit family. In terms of assembly, heterotrimer of UreA (gamma), UreB (beta) and UreC (alpha) subunits. Three heterotrimers associate to form the active enzyme.

The protein resides in the cytoplasm. The catalysed reaction is urea + 2 H2O + H(+) = hydrogencarbonate + 2 NH4(+). It participates in nitrogen metabolism; urea degradation; CO(2) and NH(3) from urea (urease route): step 1/1. Expression of the urease operon increases the likelihood of bacterial survival by contributing to acid resistance in vitro and in vivo in BALB/c mice. Y.enterocolitica enters the body via an oral path and must survive the acidic stomach before being able to colonize the intestinal mucosa. In Yersinia enterocolitica, this protein is Urease subunit beta.